A 332-amino-acid chain; its full sequence is MLSARTVLSRAGLISNASRLNSTLVVAEHDETKLAPITLNAITAASKLGNEVSVLVTGANATKVAEQVAKVNGVKRVLVAQDEKLKNNLPERVAPVILASQKQFNFTAITAGSSAFGRGVIPRVAAKLDVSSISDVTEVHSADSFTRTLYAGNAVKKVKSTAPIKLLTFRGTSFEPAKEGGSGAVENAPSADIKTDLSEFLGQELSKSERPDLATAKVVVSGGRGLKSGDNFKLIYDLADKLGAGVGASRAAVDAGYVPNDMQVGQTGKIVAPELYIAIGISGAIQHLAGMKDSKVIVAINKDPDAPIFQVADIGLKADLFKAVPELTAALP.

275-303 is a binding site for FAD; the sequence is LYIAIGISGAIQHLAGMKDSKVIVAINKD.

This sequence belongs to the ETF alpha-subunit/FixB family. As to quaternary structure, heterodimer of an alpha and a beta subunit. It depends on FAD as a cofactor.

It localises to the mitochondrion matrix. Its function is as follows. The electron transfer flavoprotein serves as a specific electron acceptor for several dehydrogenases, including five acyl-CoA dehydrogenases, glutaryl-CoA and sarcosine dehydrogenase. It transfers the electrons to the main mitochondrial respiratory chain via ETF-ubiquinone oxidoreductase (ETF dehydrogenase). The protein is Probable electron transfer flavoprotein subunit alpha, mitochondrial of Caenorhabditis elegans.